Reading from the N-terminus, the 238-residue chain is Ribosomal RNA small subunit methyltransferase G (238 aa).

Residues Gly-78, Phe-83, 129–130, and Arg-148 contribute to the S-adenosyl-L-methionine site; that span reads AE. The tract at residues 217–238 is disordered; it reads KKKETPKKYPRKAGTPAKSPIK.

Belongs to the methyltransferase superfamily. RNA methyltransferase RsmG family.

It localises to the cytoplasm. Its function is as follows. Specifically methylates the N7 position of a guanine in 16S rRNA. In Lactococcus lactis subsp. cremoris (strain MG1363), this protein is Ribosomal RNA small subunit methyltransferase G.